Here is a 367-residue protein sequence, read N- to C-terminus: Phospho-N-acetylmuramoyl-pentapeptide-transferase (367 aa).

A run of 10 helical transmembrane segments spans residues 16 to 36 (LLLAAAAFILTLIVGGWWVHF), 62 to 82 (TMGGVMIVSTVVVLTVLFNLV), 87 to 107 (MLLPLGVMISFAVLGAIDDWL), 125 to 145 (FWIMTAVAFVASLALYLPQPY), 158 to 178 (VGEVNIGLWFIPIAVLIIVFI), 190 to 210 (SLAGWNLTLSFGAYGVITFLA), 214 to 234 (LTNLMAFCFTVVGACAAFLWY), 240 to 260 (QVFMGDLGALSLGATLAVVAL), 264 to 284 (QWILLPVIGIVFVVEALSTLI), and 326 to 346 (FVLIGTVAAMVGISLALIFGS).

This sequence belongs to the glycosyltransferase 4 family. MraY subfamily. It depends on Mg(2+) as a cofactor.

The protein resides in the cell membrane. It catalyses the reaction UDP-N-acetyl-alpha-D-muramoyl-L-alanyl-gamma-D-glutamyl-meso-2,6-diaminopimeloyl-D-alanyl-D-alanine + di-trans,octa-cis-undecaprenyl phosphate = di-trans,octa-cis-undecaprenyl diphospho-N-acetyl-alpha-D-muramoyl-L-alanyl-D-glutamyl-meso-2,6-diaminopimeloyl-D-alanyl-D-alanine + UMP. Its pathway is cell wall biogenesis; peptidoglycan biosynthesis. In terms of biological role, catalyzes the initial step of the lipid cycle reactions in the biosynthesis of the cell wall peptidoglycan: transfers peptidoglycan precursor phospho-MurNAc-pentapeptide from UDP-MurNAc-pentapeptide onto the lipid carrier undecaprenyl phosphate, yielding undecaprenyl-pyrophosphoryl-MurNAc-pentapeptide, known as lipid I. The chain is Phospho-N-acetylmuramoyl-pentapeptide-transferase from Chloroflexus aggregans (strain MD-66 / DSM 9485).